A 271-amino-acid chain; its full sequence is Ribosomal RNA small subunit methyltransferase A (271 aa).

Positions 22, 24, 49, 70, 96, and 116 each coordinate S-adenosyl-L-methionine.

Belongs to the class I-like SAM-binding methyltransferase superfamily. rRNA adenine N(6)-methyltransferase family. RsmA subfamily.

The protein resides in the cytoplasm. It carries out the reaction adenosine(1518)/adenosine(1519) in 16S rRNA + 4 S-adenosyl-L-methionine = N(6)-dimethyladenosine(1518)/N(6)-dimethyladenosine(1519) in 16S rRNA + 4 S-adenosyl-L-homocysteine + 4 H(+). Its function is as follows. Specifically dimethylates two adjacent adenosines (A1518 and A1519) in the loop of a conserved hairpin near the 3'-end of 16S rRNA in the 30S particle. May play a critical role in biogenesis of 30S subunits. This Sphingopyxis alaskensis (strain DSM 13593 / LMG 18877 / RB2256) (Sphingomonas alaskensis) protein is Ribosomal RNA small subunit methyltransferase A.